The sequence spans 153 residues: Ribosome maturation factor RimP (153 aa).

It belongs to the RimP family.

It localises to the cytoplasm. Required for maturation of 30S ribosomal subunits. The sequence is that of Ribosome maturation factor RimP from Rippkaea orientalis (strain PCC 8801 / RF-1) (Cyanothece sp. (strain PCC 8801)).